Here is a 113-residue protein sequence, read N- to C-terminus: Putative pterin-4-alpha-carbinolamine dehydratase (113 aa).

Belongs to the pterin-4-alpha-carbinolamine dehydratase family.

It carries out the reaction (4aS,6R)-4a-hydroxy-L-erythro-5,6,7,8-tetrahydrobiopterin = (6R)-L-erythro-6,7-dihydrobiopterin + H2O. This chain is Putative pterin-4-alpha-carbinolamine dehydratase, found in Legionella pneumophila (strain Paris).